The following is a 192-amino-acid chain: Small ribosomal subunit protein uS5 (192 aa).

Positions 22-85 (LVDKLVTINR…DRAKRAMIRV (64 aa)) constitute an S5 DRBM domain.

It belongs to the universal ribosomal protein uS5 family. Part of the 30S ribosomal subunit. Contacts proteins S4 and S8.

Its function is as follows. With S4 and S12 plays an important role in translational accuracy. Functionally, located at the back of the 30S subunit body where it stabilizes the conformation of the head with respect to the body. This chain is Small ribosomal subunit protein uS5, found in Gluconacetobacter diazotrophicus (strain ATCC 49037 / DSM 5601 / CCUG 37298 / CIP 103539 / LMG 7603 / PAl5).